A 308-amino-acid polypeptide reads, in one-letter code: Homoserine kinase (308 aa).

95 to 105 (PQSRGLGSSAA) is a binding site for ATP.

This sequence belongs to the GHMP kinase family. Homoserine kinase subfamily.

The protein localises to the cytoplasm. It catalyses the reaction L-homoserine + ATP = O-phospho-L-homoserine + ADP + H(+). Its pathway is amino-acid biosynthesis; L-threonine biosynthesis; L-threonine from L-aspartate: step 4/5. Its function is as follows. Catalyzes the ATP-dependent phosphorylation of L-homoserine to L-homoserine phosphate. The polypeptide is Homoserine kinase (Corynebacterium jeikeium (strain K411)).